Reading from the N-terminus, the 199-residue chain is N-(5'-phosphoribosyl)anthranilate isomerase (199 aa).

Belongs to the TrpF family.

It carries out the reaction N-(5-phospho-beta-D-ribosyl)anthranilate = 1-(2-carboxyphenylamino)-1-deoxy-D-ribulose 5-phosphate. The protein operates within amino-acid biosynthesis; L-tryptophan biosynthesis; L-tryptophan from chorismate: step 3/5. This chain is N-(5'-phosphoribosyl)anthranilate isomerase, found in Streptococcus pneumoniae (strain ATCC BAA-255 / R6).